A 348-amino-acid chain; its full sequence is Malyl-CoA/beta-methylmalyl-CoA/citramalyl-CoA lyase (348 aa).

Residues 32-33 (HF), Lys-40, and Arg-92 contribute to the substrate site. Positions 157 and 184 each coordinate Mg(2+). Substrate contacts are provided by residues 183–184 (AD) and Leu-274.

Belongs to the HpcH/HpaI aldolase family. As to quaternary structure, homohexamer. Dimer of trimers. Mg(2+) serves as cofactor. The cofactor is Mn(2+).

It carries out the reaction (S)-malyl-CoA = glyoxylate + acetyl-CoA. It catalyses the reaction (2R,3S)-beta-methylmalyl-CoA = propanoyl-CoA + glyoxylate. The catalysed reaction is (3S)-citramalyl-CoA = pyruvate + acetyl-CoA. Inhibited by oxalate. In terms of biological role, involved in the 3-hydroxypropionate cycle used for autotrophic carbon dioxide fixation, and in the glyoxylate assimilation cycle used to regenerate acetyl-CoA and produce pyruvate as universal precursor for biosynthesis. As a part of the 3-hydroxypropionate cycle, it catalyzes the cleavage of (S)-malyl-CoA to yield acetyl-CoA and glyoxylate. As part of the glyoxylate assimilation cycle, it catalyzes the condensation of glyoxylate with propionyl-CoA to yield (2R,3S)-beta-methylmalyl-CoA, and catalyzes the cleavage of (S)-citramalyl-CoA to yield acetyl-CoA and pyruvate. In Chloroflexus aurantiacus, this protein is Malyl-CoA/beta-methylmalyl-CoA/citramalyl-CoA lyase (mcl).